Reading from the N-terminus, the 264-residue chain is S-adenosylmethionine decarboxylase proenzyme (264 aa).

Ser112 serves as the catalytic Schiff-base intermediate with substrate; via pyruvic acid. Residue Ser112 is modified to Pyruvic acid (Ser); by autocatalysis. His117 acts as the Proton acceptor; for processing activity in catalysis. The active-site Proton donor; for catalytic activity is Cys140.

Belongs to the prokaryotic AdoMetDC family. Type 2 subfamily. As to quaternary structure, heterooctamer of four alpha and four beta chains arranged as a tetramer of alpha/beta heterodimers. It depends on pyruvate as a cofactor. Is synthesized initially as an inactive proenzyme. Formation of the active enzyme involves a self-maturation process in which the active site pyruvoyl group is generated from an internal serine residue via an autocatalytic post-translational modification. Two non-identical subunits are generated from the proenzyme in this reaction, and the pyruvate is formed at the N-terminus of the alpha chain, which is derived from the carboxyl end of the proenzyme. The post-translation cleavage follows an unusual pathway, termed non-hydrolytic serinolysis, in which the side chain hydroxyl group of the serine supplies its oxygen atom to form the C-terminus of the beta chain, while the remainder of the serine residue undergoes an oxidative deamination to produce ammonia and the pyruvoyl group blocking the N-terminus of the alpha chain.

It carries out the reaction S-adenosyl-L-methionine + H(+) = S-adenosyl 3-(methylsulfanyl)propylamine + CO2. It participates in amine and polyamine biosynthesis; S-adenosylmethioninamine biosynthesis; S-adenosylmethioninamine from S-adenosyl-L-methionine: step 1/1. Its function is as follows. Catalyzes the decarboxylation of S-adenosylmethionine to S-adenosylmethioninamine (dcAdoMet), the propylamine donor required for the synthesis of the polyamines spermine and spermidine from the diamine putrescine. The protein is S-adenosylmethionine decarboxylase proenzyme of Photorhabdus laumondii subsp. laumondii (strain DSM 15139 / CIP 105565 / TT01) (Photorhabdus luminescens subsp. laumondii).